A 455-amino-acid chain; its full sequence is Bifunctional protein GlmU (455 aa).

Residues 1–225 (MNIVILAAGL…EWETLGVNSK (225 aa)) form a pyrophosphorylase region. UDP-N-acetyl-alpha-D-glucosamine contacts are provided by residues 6–9 (LAAG), Lys20, Gln71, 76–77 (GT), 98–100 (YGD), Gly135, Glu150, Asn165, and Asn223. Residue Asp100 coordinates Mg(2+). Asn223 lines the Mg(2+) pocket. A linker region spans residues 226–246 (VQLAELERIHQRNLAQQLLED). The N-acetyltransferase stretch occupies residues 247 to 455 (GVTLIDPARI…QRPVKQKKDA (209 aa)). 2 residues coordinate UDP-N-acetyl-alpha-D-glucosamine: Arg329 and Lys347. His359 acts as the Proton acceptor in catalysis. Residues Tyr362 and Asn373 each coordinate UDP-N-acetyl-alpha-D-glucosamine. Acetyl-CoA contacts are provided by residues Ala376, 382-383 (NY), Ser401, Ala419, and Arg436.

The protein in the N-terminal section; belongs to the N-acetylglucosamine-1-phosphate uridyltransferase family. In the C-terminal section; belongs to the transferase hexapeptide repeat family. In terms of assembly, homotrimer. It depends on Mg(2+) as a cofactor.

The protein localises to the cytoplasm. It catalyses the reaction alpha-D-glucosamine 1-phosphate + acetyl-CoA = N-acetyl-alpha-D-glucosamine 1-phosphate + CoA + H(+). It carries out the reaction N-acetyl-alpha-D-glucosamine 1-phosphate + UTP + H(+) = UDP-N-acetyl-alpha-D-glucosamine + diphosphate. The protein operates within nucleotide-sugar biosynthesis; UDP-N-acetyl-alpha-D-glucosamine biosynthesis; N-acetyl-alpha-D-glucosamine 1-phosphate from alpha-D-glucosamine 6-phosphate (route II): step 2/2. It functions in the pathway nucleotide-sugar biosynthesis; UDP-N-acetyl-alpha-D-glucosamine biosynthesis; UDP-N-acetyl-alpha-D-glucosamine from N-acetyl-alpha-D-glucosamine 1-phosphate: step 1/1. Its pathway is bacterial outer membrane biogenesis; LPS lipid A biosynthesis. In terms of biological role, catalyzes the last two sequential reactions in the de novo biosynthetic pathway for UDP-N-acetylglucosamine (UDP-GlcNAc). The C-terminal domain catalyzes the transfer of acetyl group from acetyl coenzyme A to glucosamine-1-phosphate (GlcN-1-P) to produce N-acetylglucosamine-1-phosphate (GlcNAc-1-P), which is converted into UDP-GlcNAc by the transfer of uridine 5-monophosphate (from uridine 5-triphosphate), a reaction catalyzed by the N-terminal domain. The protein is Bifunctional protein GlmU of Ralstonia nicotianae (strain ATCC BAA-1114 / GMI1000) (Ralstonia solanacearum).